The chain runs to 62 residues: Small ribosomal subunit protein eS17 (62 aa).

The protein belongs to the eukaryotic ribosomal protein eS17 family.

In Methanoculleus marisnigri (strain ATCC 35101 / DSM 1498 / JR1), this protein is Small ribosomal subunit protein eS17.